We begin with the raw amino-acid sequence, 449 residues long: Methionine aminopeptidase 2 (449 aa).

The segment at 1–91 (MAAQAAPELA…PRIPLTTLFP (91 aa)) is disordered. The segment covering 34-50 (EEAENEGDSDDDRDDEQ) has biased composition (acidic residues). Residues 61 to 75 (KKKKKKRPKKKKKTA) show a composition bias toward basic residues. His199 is a substrate binding site. Positions 219, 230, and 299 each coordinate a divalent metal cation. A substrate-binding site is contributed by His307. Residues Glu335 and Glu430 each contribute to the a divalent metal cation site.

This sequence belongs to the peptidase M24A family. Methionine aminopeptidase eukaryotic type 2 subfamily. The cofactor is Co(2+). Zn(2+) is required as a cofactor. Requires Mn(2+) as cofactor. It depends on Fe(2+) as a cofactor.

The protein localises to the cytoplasm. The enzyme catalyses Release of N-terminal amino acids, preferentially methionine, from peptides and arylamides.. Functionally, cotranslationally removes the N-terminal methionine from nascent proteins. The N-terminal methionine is often cleaved when the second residue in the primary sequence is small and uncharged (Met-Ala-, Cys, Gly, Pro, Ser, Thr, or Val). This Arthroderma benhamiae (strain ATCC MYA-4681 / CBS 112371) (Trichophyton mentagrophytes) protein is Methionine aminopeptidase 2.